The primary structure comprises 103 residues: Small ribosomal subunit protein uS10 (103 aa).

This sequence belongs to the universal ribosomal protein uS10 family. In terms of assembly, part of the 30S ribosomal subunit.

Involved in the binding of tRNA to the ribosomes. This is Small ribosomal subunit protein uS10 from Shewanella amazonensis (strain ATCC BAA-1098 / SB2B).